The chain runs to 219 residues: Probable GTP-binding protein EngB (219 aa).

An EngB-type G domain is found at 31-205 (VGVEIAFAGR…LSILNEWCHP (175 aa)). GTP is bound by residues 39–46 (GRSNAGKS), 66–70 (GRTQL), 84–87 (DLPG), 151–154 (TKSD), and 184–186 (FSA). Residues Ser46 and Thr68 each contribute to the Mg(2+) site.

This sequence belongs to the TRAFAC class TrmE-Era-EngA-EngB-Septin-like GTPase superfamily. EngB GTPase family. The cofactor is Mg(2+).

Necessary for normal cell division and for the maintenance of normal septation. The protein is Probable GTP-binding protein EngB of Shewanella sp. (strain MR-7).